We begin with the raw amino-acid sequence, 498 residues long: GPI mannosyltransferase 4 (498 aa).

9 helical membrane-spanning segments follow: residues 4–24 (AVIRYIWLLVALLVALEPAYV), 60–80 (FAPLWIFMGPALVAARLFNAG), 118–134 (AFLLSTTYVVGAFQSHT), 135–155 (FSNSIETLLAVAAVGLLEVVI), 169–189 (GVLGFLIALGLFNRVTFAGYL), 208–228 (LAALLLCFLLTSGACIWIDTL), 261–281 (YTHILVNLPMLLGPGLLFALG), 286–303 (LSLPLLSCVSGVATLSLF), and 332–352 (LTLTLKLWLAFNGLMVVIMGV). Asn429 carries N-linked (GlcNAc...) asparagine glycosylation.

It belongs to the glycosyltransferase 22 family. PIGZ subfamily.

The protein localises to the endoplasmic reticulum membrane. It functions in the pathway glycolipid biosynthesis; glycosylphosphatidylinositol-anchor biosynthesis. Functionally, alpha-1,2-mannosyltransferase involved in glycosylphosphatidylinositol-anchor biosynthesis. Transfers a fourth mannose to trimannosyl-GPIs during GPI precursor assembly. The presence of a fourth mannose in GPI is essential in fungi. The protein is GPI mannosyltransferase 4 (SMP3) of Eremothecium gossypii (strain ATCC 10895 / CBS 109.51 / FGSC 9923 / NRRL Y-1056) (Yeast).